Here is a 426-residue protein sequence, read N- to C-terminus: NADH-quinone oxidoreductase subunit H 1 (426 aa).

10 consecutive transmembrane segments (helical) span residues 22 to 42 (LWAT…VMLM), 91 to 111 (FLFW…YLVI), 124 to 144 (IGVL…VMAG), 163 to 183 (MVSY…MTSL), 206 to 226 (FIFK…IAMV), 258 to 278 (LFFL…VTLW), 299 to 319 (FSVF…IGWV), 331 to 351 (AIGL…LLIP), 357 to 377 (VSDI…YIWY), and 392 to 412 (IGWK…AVLG).

It belongs to the complex I subunit 1 family. As to quaternary structure, NDH-1 is composed of 14 different subunits. Subunits NuoA, H, J, K, L, M, N constitute the membrane sector of the complex.

The protein localises to the cell inner membrane. It catalyses the reaction a quinone + NADH + 5 H(+)(in) = a quinol + NAD(+) + 4 H(+)(out). Its function is as follows. NDH-1 shuttles electrons from NADH, via FMN and iron-sulfur (Fe-S) centers, to quinones in the respiratory chain. The immediate electron acceptor for the enzyme in this species is believed to be ubiquinone. Couples the redox reaction to proton translocation (for every two electrons transferred, four hydrogen ions are translocated across the cytoplasmic membrane), and thus conserves the redox energy in a proton gradient. This subunit may bind ubiquinone. This chain is NADH-quinone oxidoreductase subunit H 1, found in Koribacter versatilis (strain Ellin345).